The sequence spans 445 residues: Methionine aminopeptidase 2-3 (445 aa).

Positions 14 to 115 (ISDADANGAD…ENRYRTTSEE (102 aa)) are disordered. Positions 38–47 (EDDDSDDDVA) are enriched in acidic residues. The segment covering 60–75 (AKKKKNKKRKPKKKQP) has biased composition (basic residues). Residues 85 to 95 (PLSQLFPNNTY) are compositionally biased toward polar residues. The segment covering 97–115 (KGEEVEYKDENRYRTTSEE) has biased composition (basic and acidic residues). A substrate-binding site is contributed by His198. Asp218, Asp229, and His298 together coordinate a divalent metal cation. A substrate-binding site is contributed by His306. Glu331 and Glu426 together coordinate a divalent metal cation.

This sequence belongs to the peptidase M24A family. Methionine aminopeptidase eukaryotic type 2 subfamily. Co(2+) is required as a cofactor. The cofactor is Zn(2+). It depends on Mn(2+) as a cofactor. Requires Fe(2+) as cofactor.

It is found in the cytoplasm. It catalyses the reaction Release of N-terminal amino acids, preferentially methionine, from peptides and arylamides.. Functionally, cotranslationally removes the N-terminal methionine from nascent proteins. The N-terminal methionine is often cleaved when the second residue in the primary sequence is small and uncharged (Met-Ala-, Cys, Gly, Pro, Ser, Thr, or Val). This Neosartorya fischeri (strain ATCC 1020 / DSM 3700 / CBS 544.65 / FGSC A1164 / JCM 1740 / NRRL 181 / WB 181) (Aspergillus fischerianus) protein is Methionine aminopeptidase 2-3.